The sequence spans 1091 residues: TATA element modulatory factor (1091 aa).

Disordered regions lie at residues 42–86 (IPYG…KPVR) and 100–280 (FLSP…DAKS). A compositionally biased stretch (polar residues) spans 57-81 (WDTSTWGLNSTSSEPQSPPTASQAI). 4 positions are modified to phosphoserine: S73, S78, S112, and S136. 3 stretches are compositionally biased toward low complexity: residues 111 to 122 (KSPVVSKPPSKS), 131 to 142 (SSLQESSSPGQS), and 194 to 211 (SENV…TTST). A Phosphoserine modification is found at S213. The span at 217 to 234 (ETKDMALEPKEQKHEDRQ) shows a compositional bias: basic and acidic residues. 2 stretches are compositionally biased toward low complexity: residues 242–253 (VSSFSSGTSTTS) and 264–273 (ISESSASSRQ). Phosphoserine is present on residues S324, S326, S329, S334, S340, and S357. The interval 329–338 (SLDSRSVSEI) is interaction with Elongin BC complex. The segment at 360–443 (TPKTKVVEST…NQPKAPPEKE (84 aa)) is disordered. Over residues 368 to 379 (STEENAEEEEGN) the composition is skewed to acidic residues. Phosphoserine is present on residues S411 and S540. 2 coiled-coil regions span residues 443–767 (EDVC…STAR) and 824–894 (IQMS…SQLE). Phosphoserine is present on residues S923 and S926. T927 carries the phosphothreonine modification. S931 carries the post-translational modification Phosphoserine. Residues 984-1090 (IENLQSQLKL…QIDELLRQRL (107 aa)) adopt a coiled-coil conformation.

As to quaternary structure, component of the SNF/SWI transcription factor complexes. Interacts with RAB6A. Interacts with TCEB1. Interacts with STAT3 and FER. Interacts with TRNP1; may regulate TRNP1 proteasomal degradation. Post-translationally, phosphorylated by FER.

The protein localises to the cytoplasm. The protein resides in the nucleus. It localises to the golgi apparatus membrane. Functionally, potential coactivator of the androgen receptor. May play critical roles in two RAB6-dependent retrograde transport processes: one from endosomes to the Golgi and the other from the Golgi to the ER. Mediates STAT3 degradation. The sequence is that of TATA element modulatory factor (Tmf1) from Mus musculus (Mouse).